Consider the following 147-residue polypeptide: Small ribosomal subunit protein uS12 (147 aa).

This sequence belongs to the universal ribosomal protein uS12 family. As to quaternary structure, part of the 30S ribosomal subunit.

In terms of biological role, with S4 and S5 plays an important role in translational accuracy. Located at the interface of the 30S and 50S subunits. The sequence is that of Small ribosomal subunit protein uS12 from Pyrobaculum islandicum (strain DSM 4184 / JCM 9189 / GEO3).